The sequence spans 511 residues: Histidine ammonia-lyase (511 aa).

The 5-imidazolinone (Ala-Gly) cross-link spans 142-144 (ASG). The residue at position 143 (Ser-143) is a 2,3-didehydroalanine (Ser).

This sequence belongs to the PAL/histidase family. Contains an active site 4-methylidene-imidazol-5-one (MIO), which is formed autocatalytically by cyclization and dehydration of residues Ala-Ser-Gly.

The protein resides in the cytoplasm. It carries out the reaction L-histidine = trans-urocanate + NH4(+). Its pathway is amino-acid degradation; L-histidine degradation into L-glutamate; N-formimidoyl-L-glutamate from L-histidine: step 1/3. The protein is Histidine ammonia-lyase (hutH) of Rhizobium meliloti (strain 1021) (Ensifer meliloti).